Reading from the N-terminus, the 317-residue chain is Transaldolase 1 (317 aa).

Lysine 132 serves as the catalytic Schiff-base intermediate with substrate.

It belongs to the transaldolase family. Type 1 subfamily. In terms of assembly, homodimer.

Its subcellular location is the cytoplasm. The catalysed reaction is D-sedoheptulose 7-phosphate + D-glyceraldehyde 3-phosphate = D-erythrose 4-phosphate + beta-D-fructose 6-phosphate. Its pathway is carbohydrate degradation; pentose phosphate pathway; D-glyceraldehyde 3-phosphate and beta-D-fructose 6-phosphate from D-ribose 5-phosphate and D-xylulose 5-phosphate (non-oxidative stage): step 2/3. Transaldolase is important for the balance of metabolites in the pentose-phosphate pathway. The polypeptide is Transaldolase 1 (Salmonella paratyphi A (strain ATCC 9150 / SARB42)).